Consider the following 406-residue polypeptide: RNA exonuclease 4 (406 aa).

Over residues 1 to 10 the composition is skewed to polar residues; sequence MAPELSSNWK. Disordered stretches follow at residues 1–108 and 156–181; these read MAPE…TLPS and AGLT…PTDL. Composition is skewed to low complexity over residues 54 to 64, 72 to 82, and 94 to 108; these read SQQQQQASNPS, SQTQSQPSSQK, and SKPT…TLPS. Positions 162 to 173 are enriched in polar residues; sequence GHSSSSPKSNKN. The Exonuclease domain maps to 216–367; that stretch reads YLSIDCEMVG…EDARVAMLLF (152 aa). Positions 377 to 387 are enriched in basic and acidic residues; the sequence is ENSNRYEEGQA. The tract at residues 377-406 is disordered; the sequence is ENSNRYEEGQAKKGGNGGGGGGGKKKKGKK. Over residues 388-398 the composition is skewed to gly residues; it reads KKGGNGGGGGG.

Belongs to the REXO4 family.

Its subcellular location is the nucleus. Exoribonuclease involved in ribosome biosynthesis. Involved in the processing of ITS1, the internal transcribed spacer localized between the 18S and 5.8S rRNAs. The protein is RNA exonuclease 4 (rex-4) of Neurospora crassa (strain ATCC 24698 / 74-OR23-1A / CBS 708.71 / DSM 1257 / FGSC 987).